A 456-amino-acid chain; its full sequence is Imidazolonepropionase (456 aa).

Positions 104 and 106 each coordinate Fe(3+). His-104 and His-106 together coordinate Zn(2+). 3 residues coordinate 4-imidazolone-5-propanoate: Arg-113, Tyr-176, and His-209. Tyr-176 contributes to the N-formimidoyl-L-glutamate binding site. His-274 lines the Fe(3+) pocket. Position 274 (His-274) interacts with Zn(2+). Residue Gln-277 participates in 4-imidazolone-5-propanoate binding. Asp-349 contacts Fe(3+). Asp-349 serves as a coordination point for Zn(2+). Positions 351 and 353 each coordinate N-formimidoyl-L-glutamate. Residue Ser-354 participates in 4-imidazolone-5-propanoate binding.

The protein belongs to the metallo-dependent hydrolases superfamily. HutI family. Zn(2+) serves as cofactor. Fe(3+) is required as a cofactor.

Its subcellular location is the cytoplasm. The catalysed reaction is 4-imidazolone-5-propanoate + H2O = N-formimidoyl-L-glutamate. It participates in amino-acid degradation; L-histidine degradation into L-glutamate; N-formimidoyl-L-glutamate from L-histidine: step 3/3. In terms of biological role, catalyzes the hydrolytic cleavage of the carbon-nitrogen bond in imidazolone-5-propanoate to yield N-formimidoyl-L-glutamate. It is the third step in the universal histidine degradation pathway. In Verminephrobacter eiseniae (strain EF01-2), this protein is Imidazolonepropionase.